The sequence spans 344 residues: Phenylalanine--tRNA ligase alpha subunit (344 aa).

Mg(2+) is bound at residue Glu255.

It belongs to the class-II aminoacyl-tRNA synthetase family. Phe-tRNA synthetase alpha subunit type 1 subfamily. In terms of assembly, tetramer of two alpha and two beta subunits. Mg(2+) serves as cofactor.

It is found in the cytoplasm. The catalysed reaction is tRNA(Phe) + L-phenylalanine + ATP = L-phenylalanyl-tRNA(Phe) + AMP + diphosphate + H(+). The protein is Phenylalanine--tRNA ligase alpha subunit of Sulfurihydrogenibium sp. (strain YO3AOP1).